The sequence spans 1056 residues: E3 SUMO-protein ligase ZNF451 (1056 aa).

A disordered region spans residues 1–39 (MGDPGPEIIESVPPAGPEASESTTDENEDDIQFVSEGPL). The segment at 1–246 (MGDPGPEIIE…AADGHSNSLL (246 aa)) is sufficient for E3 SUMO-protein ligase activity. The interval 1 to 344 (MGDPGPEIIE…RVRCQNAGPV (344 aa)) is important for interaction with SUMO1 and SUMO2. Positions 30–37 (DIQFVSEG) are interaction with SUMO2 1. Positions 38-41 (PLRP) match the PLRP motif. The tract at residues 42 to 50 (VLEYIDLVS) is interaction with SUMO2 2. Glycyl lysine isopeptide (Lys-Gly) (interchain with G-Cter in SUMO2) cross-links involve residues K75, K77, K106, K139, and K153. S155 carries the phosphoserine modification. Position 158 is an omega-N-methylarginine (R158). Residue K167 forms a Glycyl lysine isopeptide (Lys-Gly) (interchain with G-Cter in SUMO2) linkage. The tract at residues 168–521 (PILCPIMHCN…HMSRFHGGAH (354 aa)) is important for interaction with SMAD4. A C2H2-type 1 zinc finger spans residues 169–195 (ILCPIMHCNKEFDNGHLLLGHLKRFDH). A C2H2-type 2; degenerate zinc finger spans residues 212 to 234 (FACAVCYEHFVTQQQYKDHLLSR). A C2H2-type 3 zinc finger spans residues 253-277 (YACPQCFLLFSTKDECLKHMSTKNH). Glycyl lysine isopeptide (Lys-Gly) (interchain with G-Cter in SUMO2) cross-links involve residues K270, K275, K283, K288, K301, and K309. Residues 315-338 (VKCVACHQTLRSHMELTAHFRVRC) form a C2H2-type 4; atypical zinc finger. A C2H2-type 5 zinc finger spans residues 362 to 385 (GYCSDCNQVFMDVASTQSHKNSGH). K420 is covalently cross-linked (Glycyl lysine isopeptide (Lys-Gly) (interchain with G-Cter in SUMO2)). S429 bears the Phosphoserine mark. A Glycyl lysine isopeptide (Lys-Gly) (interchain with G-Cter in SUMO2) cross-link involves residue K431. C2H2-type zinc fingers lie at residues 494 to 517 (YKCV…SRFH) and 527 to 550 (FWCR…TEFH). Residues K539 and K583 each participate in a glycyl lysine isopeptide (Lys-Gly) (interchain with G-Cter in SUMO2) cross-link. Residues 604-629 (WQCRICEDMFESQECVKQHCMSLTSH) form a C2H2-type 8; atypical zinc finger. 2 C2H2-type zinc fingers span residues 634-657 (YSCA…QDEH) and 665-688 (YFCG…KEHH). A Glycyl lysine isopeptide (Lys-Gly) (interchain with G-Cter in SUMO2) cross-link involves residue K645. A Glycyl lysine isopeptide (Lys-Gly) (interchain with G-Cter in SUMO1); alternate cross-link involves residue K704. A Glycyl lysine isopeptide (Lys-Gly) (interchain with G-Cter in SUMO2); alternate cross-link involves residue K704. Glycyl lysine isopeptide (Lys-Gly) (interchain with G-Cter in SUMO2) cross-links involve residues K729 and K746. C2H2-type zinc fingers lie at residues 751–774 (FRCS…CQVH) and 787–810 (IKCG…HRKH). Residues K788, K815, K843, K849, K947, K988, and K989 each participate in a glycyl lysine isopeptide (Lys-Gly) (interchain with G-Cter in SUMO2) cross-link. 2 disordered regions span residues 806-830 (FHRK…STCQ) and 839-858 (EKNL…KGAE). Basic and acidic residues predominate over residues 849-858 (KHSDVEKGAE). A disordered region spans residues 1019 to 1045 (KECDSDDSSGMKGSPAEELRATEDVEL). Residues 1033–1045 (PAEELRATEDVEL) are compositionally biased toward basic and acidic residues. The interval 1045 to 1056 (LEEAIRRSLEEM) is important for ubiquitin binding.

It belongs to the krueppel C2H2-type zinc-finger protein family. In terms of assembly, homooligomer. Interacts (via N-terminal region) with SUMO1. Interacts (via N-terminal region) with SUMO2. Interacts simultaneously with two SUMO2 chains. Identified in a complex with SUMO2 and UBE2I/UBC9, where one ZNF451 interacts with one UBE2I/UBC9 and two SUMO2 chains, one bound to the UBE2I/UBC9 active site and the other to another region of the same UBE2I/UBC9 molecule. Interacts (via C-terminus) with ubiquitin. Interacts (via N-terminal zinc-finger domains) with SMAD4 (via MH2 domain). Interacts with SMAD2 and SMAD3. Identified in a complex that contains at least ZNF451, SMAD2, SMAD3 and SMAD4. Interacts with EP300. Inhibits interaction between EP300 and the SMAD4 complex. Interacts with SIMC1. Sumoylated. Predominantly sumoylated on the N-terminal region that is important for interaction with SUMO1 and SUMO2. Sumoylation is important for localization in nuclear granules; desumoylation leads to diffuse nucleoplasmic location. Autosumoylated (in vitro). Sumoylation enhances E3 SUMO-protein ligase activity.

The protein localises to the nucleus. Its subcellular location is the PML body. The protein resides in the nucleoplasm. The protein operates within protein modification; protein sumoylation. In terms of biological role, E3 SUMO-protein ligase; has a preference for SUMO2 and SUMO3 and facilitates UBE2I/UBC9-mediated sumoylation of target proteins. Plays a role in protein SUMO2 modification in response to stress caused by DNA damage and by proteasome inhibitors (in vitro). Required for MCM4 sumoylation. Has no activity with SUMO1. Preferentially transfers an additional SUMO2 chain onto the SUMO2 consensus site 'Lys-11'. Negatively regulates transcriptional activation mediated by the SMAD4 complex in response to TGF-beta signaling. Inhibits EP300-mediated acetylation of histone H3 at 'Lys-9'. Plays a role in regulating the transcription of AR targets. This is E3 SUMO-protein ligase ZNF451 (Znf451) from Mus musculus (Mouse).